The following is a 347-amino-acid chain: Protein RecA (347 aa).

68–75 (GPESSGKT) contributes to the ATP binding site.

The protein belongs to the RecA family.

The protein resides in the cytoplasm. In terms of biological role, can catalyze the hydrolysis of ATP in the presence of single-stranded DNA, the ATP-dependent uptake of single-stranded DNA by duplex DNA, and the ATP-dependent hybridization of homologous single-stranded DNAs. It interacts with LexA causing its activation and leading to its autocatalytic cleavage. This Mycobacterium sp. (strain JLS) protein is Protein RecA.